Reading from the N-terminus, the 160-residue chain is MAPK regulated corepressor interacting protein 2 (160 aa).

M1 bears the N-acetylmethionine mark. A disordered region spans residues 1–22 (MYTITKGPSKLVAQRRTGPTQQ). Residue R35 is modified to Omega-N-methylarginine. Residues 43–64 (LPAHLQPSAQTQGPWPLASSGP) form a disordered region. S61 is modified (phosphoserine). An Omega-N-methylarginine modification is found at R65. S82 carries the post-translational modification Phosphoserine.

This sequence belongs to the MCRIP family. Interacts with DDX6. Interacts with MCRIP1.

Its subcellular location is the cytoplasm. It localises to the stress granule. The protein resides in the nucleus. This is MAPK regulated corepressor interacting protein 2 (Mcrip2) from Mus musculus (Mouse).